The chain runs to 356 residues: Protein pelota homolog (356 aa).

It belongs to the eukaryotic release factor 1 family. Pelota subfamily. As to quaternary structure, monomer. The cofactor is a divalent metal cation.

It localises to the cytoplasm. Functionally, may function in recognizing stalled ribosomes, interact with stem-loop structures in stalled mRNA molecules, and effect endonucleolytic cleavage of the mRNA. May play a role in the release non-functional ribosomes and degradation of damaged mRNAs. Has endoribonuclease activity. This chain is Protein pelota homolog, found in Desulfurococcus amylolyticus (strain DSM 18924 / JCM 16383 / VKM B-2413 / 1221n) (Desulfurococcus kamchatkensis).